The primary structure comprises 200 residues: Adenylate kinase (200 aa).

10–15 (GAGKGT) contributes to the ATP binding site. The NMP stretch occupies residues 30–59 (STGDMLRAAVAAETPVGLEAKAIMESGGLV). AMP-binding positions include Thr-31, Arg-36, 57 to 59 (GLV), 85 to 88 (GFPR), and Gln-92. The segment at 126-142 (KRAEETAARGQPVRKDD) is LID. ATP is bound at residue Arg-127. Residues Arg-139 and Arg-150 each contribute to the AMP site. ATP is bound at residue Lys-178.

Belongs to the adenylate kinase family. Monomer.

Its subcellular location is the cytoplasm. The catalysed reaction is AMP + ATP = 2 ADP. The protein operates within purine metabolism; AMP biosynthesis via salvage pathway; AMP from ADP: step 1/1. Its function is as follows. Catalyzes the reversible transfer of the terminal phosphate group between ATP and AMP. Plays an important role in cellular energy homeostasis and in adenine nucleotide metabolism. The chain is Adenylate kinase from Methylorubrum extorquens (strain CM4 / NCIMB 13688) (Methylobacterium extorquens).